A 687-amino-acid polypeptide reads, in one-letter code: Elongation factor G (687 aa).

Residues 8–282 (NKFRNIGIMA…AVLAYLPSPL (275 aa)) form the tr-type G domain. Residues 17-24 (AHIDAGKT), 81-85 (DTPGH), and 135-138 (NKMD) each bind GTP.

Belongs to the TRAFAC class translation factor GTPase superfamily. Classic translation factor GTPase family. EF-G/EF-2 subfamily.

It is found in the cytoplasm. Catalyzes the GTP-dependent ribosomal translocation step during translation elongation. During this step, the ribosome changes from the pre-translocational (PRE) to the post-translocational (POST) state as the newly formed A-site-bound peptidyl-tRNA and P-site-bound deacylated tRNA move to the P and E sites, respectively. Catalyzes the coordinated movement of the two tRNA molecules, the mRNA and conformational changes in the ribosome. The protein is Elongation factor G of Clostridium novyi (strain NT).